The sequence spans 373 residues: Arfaptin-1 (373 aa).

The tract at residues 1–47 is disordered; that stretch reads MAQESPKNSAAEIPVTSNGEVDDSREHSFNRDLKHSLPSGLGLSETQ. Ala-2 carries the N-acetylalanine modification. Ser-5, Ser-28, Ser-36, Ser-39, Ser-69, Ser-79, and Ser-132 each carry phosphoserine. Basic and acidic residues predominate over residues 22-35; the sequence is DDSREHSFNRDLKH. The AH domain maps to 153 to 353; it reads TVDLELEAQI…NQKQLEQTLK (201 aa). A Phosphothreonine modification is found at Thr-361.

As to quaternary structure, forms homodimers or heterodimers with ARFIP2. Interacts with non-myristoylated GTP-bound ARF3, but not to GDP-bound ARF3. Interacts with ARF1. Binds with lower affinity to ARF5 and with very little affinity to ARF6. Interacts with ARL1. Interacts with ATG9A. Phosphorylated by PRKD1; phosphorylation delocalizes ARFIP1 from the Golgi and disrupts its ability to inhibit the activity of ADP-ribosylation factor, an important component of the vesicle scission machinery. As to expression, ubiquitously expressed. Higher levels in liver, pancreas, placenta, skeletal muscle and heart.

It localises to the golgi apparatus. The protein resides in the trans-Golgi network membrane. In terms of biological role, plays a role in controlling biogenesis of secretory granules at the trans-Golgi network. Mechanistically, binds ARF-GTP at the neck of a growing secretory granule precursor and forms a protective scaffold. Once the granule precursor has been completely loaded, active PRKD1 phosphorylates ARFIP1 and releases it from ARFs. In turn, ARFs induce fission. Through this mechanism, ensures proper secretory granule formation at the Golgi of pancreatic beta cells. This Homo sapiens (Human) protein is Arfaptin-1.